The primary structure comprises 727 residues: Translation initiation factor IF-2, mitochondrial (727 aa).

The transit peptide at 1 to 29 (MNQKLLKLENLLRFHTICRQVHSPSQRRL) directs the protein to the mitochondrion. One can recognise a tr-type G domain in the interval 178–346 (PRSPVVTVMG…ATIALAEILE (169 aa)). The interval 187–194 (GHVDHGKT) is G1. 187–194 (GHVDHGKT) provides a ligand contact to GTP. The interval 212–216 (GITQH) is G2. Residues 234 to 237 (DTPG) and 288 to 291 (NKCD) each bind GTP. The G3 stretch occupies residues 234-237 (DTPG). A G4 region spans residues 288 to 291 (NKCD). Residues 324-326 (SAL) form a G5 region. Position 688 is a phosphothreonine (T688).

This sequence belongs to the TRAFAC class translation factor GTPase superfamily. Classic translation factor GTPase family. IF-2 subfamily. As to quaternary structure, monomer.

The protein resides in the mitochondrion. One of the essential components for the initiation of protein synthesis. Protects formylmethionyl-tRNA from spontaneous hydrolysis and promotes its binding to the 30S ribosomal subunits. Also involved in the hydrolysis of GTP during the formation of the 70S ribosomal complex. This Mus musculus (Mouse) protein is Translation initiation factor IF-2, mitochondrial (Mtif2).